The primary structure comprises 566 residues: Urease subunit beta (566 aa).

One can recognise a Urease domain in the interval 129–566; the sequence is GGIDTHIHFI…VPMARRYFMF (438 aa). Residues histidine 134, histidine 136, and lysine 217 each contribute to the Ni(2+) site. Residue lysine 217 is modified to N6-carboxylysine. Histidine 219 serves as a coordination point for substrate. Residues histidine 246 and histidine 272 each coordinate Ni(2+). Histidine 320 functions as the Proton donor in the catalytic mechanism. Aspartate 360 lines the Ni(2+) pocket.

It belongs to the metallo-dependent hydrolases superfamily. Urease alpha subunit family. As to quaternary structure, heterohexamer of 3 UreA (alpha) and 3 UreB (beta) subunits. Ni cation serves as cofactor. Carboxylation allows a single lysine to coordinate two nickel ions.

Its subcellular location is the cytoplasm. It carries out the reaction urea + 2 H2O + H(+) = hydrogencarbonate + 2 NH4(+). Its pathway is nitrogen metabolism; urea degradation; CO(2) and NH(3) from urea (urease route): step 1/1. This Aliarcobacter butzleri (strain RM4018) (Arcobacter butzleri) protein is Urease subunit beta.